We begin with the raw amino-acid sequence, 272 residues long: Transformer-2 sex-determining protein (272 aa).

Disordered regions lie at residues 21–102 (KHKC…DHPQ) and 182–272 (ITQR…QSRY). Residues 26–41 (HSSATSSPSSAASSES) are compositionally biased toward low complexity. The segment covering 87 to 102 (TSRDRQRMRQARDHPQ) has biased composition (basic and acidic residues). The region spanning 105 to 183 (RCIGVFGLNT…RRIRVDYSIT (79 aa)) is the RRM domain. Positions 184–204 (QRAHTPTPGVYMGRPSRPLGR) are linker. Residues 205 to 218 (RSRERDYSTRDTSR) show a composition bias toward basic and acidic residues. Positions 238-266 (RKYRSRHRYDRSRSRTRSYSRSRSPRKPV) are enriched in basic residues.

It belongs to the splicing factor SR family. Extensively phosphorylated on serine residues in the RS domain.

Required for female sex determination in somatic cells and for spermatogenesis in male germ cells. Positive regulator of female-specific splicing and/or polyadenylation of doublesex (dsx) pre-mRNA. Splicing requires an enhancer complex, dsxRE (dsx repeat element: which contains six copies of a 13-nucleotide repeat and a purine-rich enhancer (PRE)). DsxRE is formed through cooperative interactions between tra, tra2 and the sr proteins, and these interactions require both the repeat sequences and PRE. PRE is required for specific binding of tra2 to the dsxRE. Protein-RNA and protein-protein interactions are involved in tra-2 dependent activation and repression of alternative splicing. This is Transformer-2 sex-determining protein (tra2) from Drosophila virilis (Fruit fly).